Reading from the N-terminus, the 447-residue chain is Serine/threonine-protein kinase NLK2 (447 aa).

The region spanning 60 to 349 (PEPDRPIGYG…AKDALAHPYL (290 aa)) is the Protein kinase domain. ATP contacts are provided by residues 66 to 74 (IGYGAFGVV) and Lys89. The active-site Proton acceptor is Asp186.

This sequence belongs to the protein kinase superfamily. CMGC Ser/Thr protein kinase family. MAP kinase subfamily. Interacts with sox11, hmgxb4/hmg2l1, rnf138/narf, stat3.1 and mef2a. It depends on Mg(2+) as a cofactor. As to expression, expressed widely in the ectoderm during early gastrula stage when neural induction is taking place. Expressed in the head region of neurula stage embryos. At the end of neurulation, expression becomes localized to the nervous system, and is restricted to the central nervous system, eye and head neural crest cells by the early tadpole stages.

The protein localises to the nucleus. It localises to the cytoplasm. The catalysed reaction is L-seryl-[protein] + ATP = O-phospho-L-seryl-[protein] + ADP + H(+). It catalyses the reaction L-threonyl-[protein] + ATP = O-phospho-L-threonyl-[protein] + ADP + H(+). Its activity is regulated as follows. Activated by tyrosine and threonine phosphorylation. Negatively regulates Wnt/beta-catenin-signaling during development. Plays a role together with sox11 in neural induction during early embryogenesis. Involved in TGFbeta-mediated mesoderm induction in early embryos, acting downstream of map3k7/tak1 to phosphorylate stat3.1. Augments the rnf138/narf-directed ubiquitination and degradation of tcf/lef by enhancing the association of rnf138/narf and tcf/lef. Phosphorylates mef2a to play a role in anterior neural development, including eye formation. This is Serine/threonine-protein kinase NLK2 (nlk.2) from Xenopus laevis (African clawed frog).